A 596-amino-acid chain; its full sequence is UvrABC system protein C (596 aa).

One can recognise a GIY-YIG domain in the interval 14–91 (QQPGCYLMKD…IKKYDPRYNV (78 aa)). Residues 196-231 (KDIRKNLAGEMQKASEALNFERAKEIRDTIQHIDAT) enclose the UVR domain.

It belongs to the UvrC family. Interacts with UvrB in an incision complex.

The protein resides in the cytoplasm. Its function is as follows. The UvrABC repair system catalyzes the recognition and processing of DNA lesions. UvrC both incises the 5' and 3' sides of the lesion. The N-terminal half is responsible for the 3' incision and the C-terminal half is responsible for the 5' incision. This Oceanobacillus iheyensis (strain DSM 14371 / CIP 107618 / JCM 11309 / KCTC 3954 / HTE831) protein is UvrABC system protein C.